We begin with the raw amino-acid sequence, 511 residues long: 60 kDa neurofilament protein (511 aa).

The interval methionine 1–serine 32 is disordered. Residues methionine 1–aspartate 99 are head. Polar residues predominate over residues arginine 21–serine 30. The IF rod domain occupies glutamate 96–valine 449. Residues methionine 100 to tryptophan 135 are coil 1A. The interval glycine 136 to methionine 145 is linker 1. Residues tyrosine 146–alanine 284 form a coil 1B region. The segment at alanine 285–leucine 303 is linker 12. The tract at residues alanine 304–valine 449 is coil 2. The tract at residues glycine 450–aspartate 511 is tail. The disordered stretch occupies residues glycine 479 to aspartate 511. Residues threonine 483–threonine 492 are compositionally biased toward low complexity. The span at glutamine 495–aspartate 511 shows a compositional bias: basic and acidic residues.

This sequence belongs to the intermediate filament family.

Functionally, major squid neurofilament protein. The chain is 60 kDa neurofilament protein from Doryteuthis pealeii (Longfin inshore squid).